An 88-amino-acid chain; its full sequence is Exodeoxyribonuclease 7 small subunit (88 aa).

The protein belongs to the XseB family. In terms of assembly, heterooligomer composed of large and small subunits.

Its subcellular location is the cytoplasm. It carries out the reaction Exonucleolytic cleavage in either 5'- to 3'- or 3'- to 5'-direction to yield nucleoside 5'-phosphates.. In terms of biological role, bidirectionally degrades single-stranded DNA into large acid-insoluble oligonucleotides, which are then degraded further into small acid-soluble oligonucleotides. The protein is Exodeoxyribonuclease 7 small subunit of Bordetella petrii (strain ATCC BAA-461 / DSM 12804 / CCUG 43448).